Consider the following 681-residue polypeptide: Methionine--tRNA ligase (681 aa).

The 'HIGH' region motif lies at 27 to 37 (DYANGTPHIGH). Positions 316-320 (KMGKS) match the 'KMSKS' region motif. Lys-319 contacts ATP. The tract at residues 522 to 571 (FPKPEPKADETKNAEAKPPKPQAKKEKKTVTDTAPAKTTEQKPEAAAPAQ) is disordered. The segment covering 525 to 539 (PEPKADETKNAEAKP) has biased composition (basic and acidic residues). In terms of domain architecture, tRNA-binding spans 580–681 (DFAKIDLRIA…LDLPSGTKVR (102 aa)).

This sequence belongs to the class-I aminoacyl-tRNA synthetase family. MetG type 2B subfamily. Homodimer.

It is found in the cytoplasm. The catalysed reaction is tRNA(Met) + L-methionine + ATP = L-methionyl-tRNA(Met) + AMP + diphosphate. Is required not only for elongation of protein synthesis but also for the initiation of all mRNA translation through initiator tRNA(fMet) aminoacylation. The sequence is that of Methionine--tRNA ligase (metG) from Deinococcus radiodurans (strain ATCC 13939 / DSM 20539 / JCM 16871 / CCUG 27074 / LMG 4051 / NBRC 15346 / NCIMB 9279 / VKM B-1422 / R1).